The sequence spans 327 residues: Beta-ketoacyl-[acyl-carrier-protein] synthase III (327 aa).

Residues C114 and H254 contribute to the active site. Residues Q255 to R259 are ACP-binding. N284 is a catalytic residue.

Belongs to the thiolase-like superfamily. FabH family. Homodimer.

The protein localises to the cytoplasm. It catalyses the reaction malonyl-[ACP] + acetyl-CoA + H(+) = 3-oxobutanoyl-[ACP] + CO2 + CoA. The protein operates within lipid metabolism; fatty acid biosynthesis. Functionally, catalyzes the condensation reaction of fatty acid synthesis by the addition to an acyl acceptor of two carbons from malonyl-ACP. Catalyzes the first condensation reaction which initiates fatty acid synthesis and may therefore play a role in governing the total rate of fatty acid production. Possesses both acetoacetyl-ACP synthase and acetyl transacylase activities. Its substrate specificity determines the biosynthesis of branched-chain and/or straight-chain of fatty acids. In Levilactobacillus brevis (strain ATCC 367 / BCRC 12310 / CIP 105137 / JCM 1170 / LMG 11437 / NCIMB 947 / NCTC 947) (Lactobacillus brevis), this protein is Beta-ketoacyl-[acyl-carrier-protein] synthase III.